The primary structure comprises 431 residues: Putative serine/threonine-protein kinase A (431 aa).

The Protein kinase domain maps to 20 to 279 (YLNKGIVGLG…VREIFQIPYI (260 aa)). Residues 26–34 (VGLGSYGEA) and lysine 49 contribute to the ATP site. Aspartate 147 functions as the Proton acceptor in the catalytic mechanism. One can recognise a PH domain in the interval 331–429 (DVTHRGHVNK…WVHAIQRGIG (99 aa)).

It belongs to the protein kinase superfamily. Ser/Thr protein kinase family.

The catalysed reaction is L-seryl-[protein] + ATP = O-phospho-L-seryl-[protein] + ADP + H(+). It carries out the reaction L-threonyl-[protein] + ATP = O-phospho-L-threonyl-[protein] + ADP + H(+). This is Putative serine/threonine-protein kinase A (NRKA) from Trypanosoma brucei brucei.